Consider the following 263-residue polypeptide: Endonuclease 8 (263 aa).

Pro2 serves as the catalytic Schiff-base intermediate with DNA. The Proton donor role is filled by Glu3. Lys53 (proton donor; for beta-elimination activity) is an active-site residue. Positions 70, 125, and 169 each coordinate DNA. The FPG-type zinc-finger motif lies at 229–263; that stretch reads KVFHRDGEVCERCGGIIEKTTLSSRPFYWCPHCQK. Catalysis depends on Arg253, which acts as the Proton donor; for delta-elimination activity.

The protein belongs to the FPG family. The cofactor is Zn(2+).

The enzyme catalyses 2'-deoxyribonucleotide-(2'-deoxyribose 5'-phosphate)-2'-deoxyribonucleotide-DNA = a 3'-end 2'-deoxyribonucleotide-(2,3-dehydro-2,3-deoxyribose 5'-phosphate)-DNA + a 5'-end 5'-phospho-2'-deoxyribonucleoside-DNA + H(+). Involved in base excision repair of DNA damaged by oxidation or by mutagenic agents. Acts as a DNA glycosylase that recognizes and removes damaged bases. Has a preference for oxidized pyrimidines, such as thymine glycol, 5,6-dihydrouracil and 5,6-dihydrothymine. Has AP (apurinic/apyrimidinic) lyase activity and introduces nicks in the DNA strand. Cleaves the DNA backbone by beta-delta elimination to generate a single-strand break at the site of the removed base with both 3'- and 5'-phosphates. The chain is Endonuclease 8 from Salmonella newport (strain SL254).